The following is a 144-amino-acid chain: Large ribosomal subunit protein uL15 (144 aa).

Residues 1–52 (MRLNTLSPAEGAKHAPKRVGRGIGSGLGKTGGRGHKGQKSRSGGGVRRGFEG) form a disordered region. Residues 21–31 (RGIGSGLGKTG) are compositionally biased toward gly residues.

The protein belongs to the universal ribosomal protein uL15 family. Part of the 50S ribosomal subunit.

Functionally, binds to the 23S rRNA. This is Large ribosomal subunit protein uL15 from Buchnera aphidicola subsp. Acyrthosiphon kondoi (Acyrthosiphon kondoi symbiotic bacterium).